Consider the following 345-residue polypeptide: MPRVYIGRLSYNVREKDIQRFFSGYGRLLGIDLKNGYGFVEFEDSRDADDAVYELNGKELCGERVIVEHARGPRRDRDGYSYGSRSGGGGYSSRRTSGRDKYGPPVRTEFRLIVENLSSRCSWQDLKDFMRQAGEVTYADAHKERTNEGVIEFRSYSDMKRALDKLDGTEINGRNIRLIEDKPRTSHRRSYSGSRSRSRSRRRSRSRSRRSSRSRSRSISKSRSRSRSRSKGRSRSRSKGRKSRSKSKSKPKSDRGSRSRSRSRSKDEYEKSRSRSRSRSRSPKENGKGDIKSKSRSRSQSRSDSPLPAPPSKARSVSPPPKRASRSHSRSRSKSRSRSRSSSRD.

The RRM 1 domain occupies 1–72 (MPRVYIGRLS…ERVIVEHARG (72 aa)). A phosphoserine mark is found at Ser45, Ser81, and Ser84. The disordered stretch occupies residues 75-102 (RDRDGYSYGSRSGGGGYSSRRTSGRDKY). One can recognise an RRM 2 domain in the interval 110–183 (FRLIVENLSS…RNIRLIEDKP (74 aa)). The residue at position 165 (Lys165) is an N6-acetyllysine. A disordered region spans residues 176 to 345 (IRLIEDKPRT…RSRSRSSSRD (170 aa)). Residue Lys182 forms a Glycyl lysine isopeptide (Lys-Gly) (interchain with G-Cter in SUMO2) linkage. Positions 185 to 250 (TSHRRSYSGS…RKSRSKSKSK (66 aa)) are enriched in basic residues. Composition is skewed to basic and acidic residues over residues 264–273 (RSKDEYEKSR) and 282–293 (SPKENGKGDIKS). Ser299 and Ser301 each carry phosphoserine. Ser305 carries the phosphoserine; by DYRK1A modification. Phosphoserine is present on residues Ser316 and Ser318. Over residues 323–345 (RASRSHSRSRSKSRSRSRSSSRD) the composition is skewed to basic residues.

It belongs to the splicing factor SR family. In terms of assembly, binds SREK1/SFRS12. Interacts with DYRK1A. In terms of processing, extensively phosphorylated on serine residues in the RS domain. Phosphorylated by DYRK1A, probably in the RS domain. Phosphorylation by DYRK1A modulates alternative splice site selection and inhibits the expression of MAPT/Tau exon 10.

The protein localises to the nucleus. The protein resides in the nucleus speckle. Plays a role in constitutive splicing and modulates the selection of alternative splice sites. Plays a role in the alternative splicing of MAPT/Tau exon 10. Binds to alternative exons of TNC pre-mRNA and promotes the expression of alternatively spliced TNC. Plays a role in wound healing and in the regulation of keratinocyte differentiation and proliferation via its role in alternative splicing. The sequence is that of Serine/arginine-rich splicing factor 6 (SRSF6) from Bos taurus (Bovine).